A 288-amino-acid polypeptide reads, in one-letter code: 33 kDa chaperonin (288 aa).

Intrachain disulfides connect C235–C237 and C268–C271.

This sequence belongs to the HSP33 family. In terms of processing, under oxidizing conditions two disulfide bonds are formed involving the reactive cysteines. Under reducing conditions zinc is bound to the reactive cysteines and the protein is inactive.

The protein resides in the cytoplasm. Functionally, redox regulated molecular chaperone. Protects both thermally unfolding and oxidatively damaged proteins from irreversible aggregation. Plays an important role in the bacterial defense system toward oxidative stress. The sequence is that of 33 kDa chaperonin from Streptococcus thermophilus (strain CNRZ 1066).